A 277-amino-acid chain; its full sequence is Nuclear egress protein 2 (277 aa).

Topologically, residues 1 to 250 (MEVIPNINSR…ASGECVTTIR (250 aa)) are perinuclear space. The chain crosses the membrane as a helical span at residues 251–271 (IPRYIVMLWIFSVLLAMVTWG). The Nuclear segment spans residues 272 to 277 (SYRLYS).

Belongs to the herpesviridae NEC2 protein family. As to quaternary structure, forms a heterohexameric complex with NEC1. In terms of processing, phosphorylated.

It localises to the host nucleus inner membrane. Functionally, plays an essential role in virion nuclear egress, the first step of virion release from infected cell. Within the host nucleus, NEC1 interacts with the newly formed capsid through the vertexes and directs it to the inner nuclear membrane by associating with NEC2. Induces the budding of the capsid at the inner nuclear membrane as well as its envelopment into the perinuclear space. There, the NEC1/NEC2 complex promotes the fusion of the enveloped capsid with the outer nuclear membrane and the subsequent release of the viral capsid into the cytoplasm where it will reach the secondary budding sites in the host Golgi or trans-Golgi network. The protein is Nuclear egress protein 2 of Gallid herpesvirus 2 (strain Chicken/Md5/ATCC VR-987) (GaHV-2).